The following is a 264-amino-acid chain: Probable septum site-determining protein MinC (264 aa).

Residues 103–147 (SHGRRPRGGNDAKDADRNDAQDAQGAPEHAQAAEAPASTSAIPPA) form a disordered region. Positions 110–122 (GGNDAKDADRNDA) are enriched in basic and acidic residues. Residues 124 to 147 (DAQGAPEHAQAAEAPASTSAIPPA) are compositionally biased toward low complexity.

The protein belongs to the MinC family. In terms of assembly, interacts with MinD and FtsZ.

Cell division inhibitor that blocks the formation of polar Z ring septums. Rapidly oscillates between the poles of the cell to destabilize FtsZ filaments that have formed before they mature into polar Z rings. Prevents FtsZ polymerization. This Ralstonia pickettii (strain 12J) protein is Probable septum site-determining protein MinC.